A 367-amino-acid chain; its full sequence is MTPEILPIEQYDDQLAEKTERLRGMMAPFNAPEPVVFRSPVSHYRMRAEFRIWHEGDELYHIMFDQQTKQRIRVDRFPAASELINRLMPELLAAIQPDSVLRRKLFQIDYLSTLSGEVIVSLLYHRALDEEWQEHARALRDSLTAQGFRLQLIGRATKTKICLDRDYVDECLPVAGRDMIYRQVENSFTQPNAAINIQMLEWALDATAGSTGDLLELYCGNGNFSLALARNFERVLATEIAKPSVAAAQYNIAANQIENVQIIRMAAEEFTQAMQGVRQFNRLQGIDLTSYQCETIFVDPPRSGLDDETVKLVQAYPRILYISCNPETLSHNLQTLSETHDIRRLALFDQFPYTHHMECGVLLEKRQ.

5 residues coordinate S-adenosyl-L-methionine: glutamine 190, tyrosine 218, asparagine 223, glutamate 239, and aspartate 299. Cysteine 324 acts as the Nucleophile in catalysis. Residue glutamate 358 is the Proton acceptor of the active site.

This sequence belongs to the class I-like SAM-binding methyltransferase superfamily. RNA M5U methyltransferase family. TrmA subfamily.

The catalysed reaction is uridine(54) in tRNA + S-adenosyl-L-methionine = 5-methyluridine(54) in tRNA + S-adenosyl-L-homocysteine + H(+). It catalyses the reaction uridine(341) in tmRNA + S-adenosyl-L-methionine = 5-methyluridine(341) in tmRNA + S-adenosyl-L-homocysteine + H(+). Functionally, dual-specificity methyltransferase that catalyzes the formation of 5-methyluridine at position 54 (m5U54) in all tRNAs, and that of position 341 (m5U341) in tmRNA (transfer-mRNA). This chain is tRNA/tmRNA (uracil-C(5))-methyltransferase, found in Pectobacterium carotovorum subsp. carotovorum (strain PC1).